The sequence spans 374 residues: 3-dehydroquinate synthase (374 aa).

This sequence belongs to the archaeal-type DHQ synthase family.

The enzyme catalyses 2-amino-2,3,7-trideoxy-D-lyxo-hept-6-ulosonate + NAD(+) + H2O = 3-dehydroquinate + NH4(+) + NADH + H(+). In terms of biological role, catalyzes the oxidative deamination and cyclization of 2-amino-3,7-dideoxy-D-threo-hept-6-ulosonic acid (ADH) to yield 3-dehydroquinate (DHQ), which is fed into the canonical shikimic pathway of aromatic amino acid biosynthesis. The chain is 3-dehydroquinate synthase from Methanothermobacter thermautotrophicus (strain ATCC 29096 / DSM 1053 / JCM 10044 / NBRC 100330 / Delta H) (Methanobacterium thermoautotrophicum).